The chain runs to 430 residues: Serine--tRNA ligase (430 aa).

A disordered region spans residues 47–66 (AQAEQNKASKEAGAAKGRGD). 231-233 (TSE) lines the L-serine pocket. ATP is bound at residue 262-264 (RSE). Glu-285 contributes to the L-serine binding site. 349–352 (EISS) provides a ligand contact to ATP. Ser-385 provides a ligand contact to L-serine.

The protein belongs to the class-II aminoacyl-tRNA synthetase family. Type-1 seryl-tRNA synthetase subfamily. As to quaternary structure, homodimer. The tRNA molecule binds across the dimer.

Its subcellular location is the cytoplasm. It carries out the reaction tRNA(Ser) + L-serine + ATP = L-seryl-tRNA(Ser) + AMP + diphosphate + H(+). It catalyses the reaction tRNA(Sec) + L-serine + ATP = L-seryl-tRNA(Sec) + AMP + diphosphate + H(+). It functions in the pathway aminoacyl-tRNA biosynthesis; selenocysteinyl-tRNA(Sec) biosynthesis; L-seryl-tRNA(Sec) from L-serine and tRNA(Sec): step 1/1. In terms of biological role, catalyzes the attachment of serine to tRNA(Ser). Is also able to aminoacylate tRNA(Sec) with serine, to form the misacylated tRNA L-seryl-tRNA(Sec), which will be further converted into selenocysteinyl-tRNA(Sec). The chain is Serine--tRNA ligase from Paracoccus denitrificans (strain Pd 1222).